A 1042-amino-acid chain; its full sequence is Ubiquitin carboxyl-terminal hydrolase 38 (1042 aa).

The region spanning 445 to 949 (TGLINLGNTC…TAYVLLYKKQ (505 aa)) is the USP domain. Cys-454 serves as the catalytic Nucleophile. His-857 acts as the Proton acceptor in catalysis.

Belongs to the peptidase C19 family. As to quaternary structure, interacts with isoform 1 of FBXW7; this interaction prevents FBXW7-mediated degradation of MYC. As to expression, highly expressed in skeletal muscle. Expressed in adrenal gland.

It is found in the cytoplasm. The protein localises to the nucleus. The catalysed reaction is Thiol-dependent hydrolysis of ester, thioester, amide, peptide and isopeptide bonds formed by the C-terminal Gly of ubiquitin (a 76-residue protein attached to proteins as an intracellular targeting signal).. Its function is as follows. Deubiquitinating enzyme that plays a role in various cellular processes, including DNA repair, cell cycle regulation, and immune response. Plays a role in the inhibition of type I interferon signaling by mediating the 'Lys-33' to 'Lys-48' ubiquitination transition of TBK1 leading to its degradation. Cleaves the ubiquitin chain from the histone demethylase LSD1/KDM1A and prevents it from degradation by the 26S proteasome, thus maintaining LSD1 protein level in cells. Plays a role in the DNA damage response by regulating the deacetylase activity of HDAC1. Mechanistically, removes the 'Lys-63'-linked ubiquitin chain promoting the deacetylase activity of HDAC1 in response to DNA damage. Also acts as a specific deubiquitinase of histone deacetylase 3/HDAC3 and cleaves its 'Lys-63'-linked ubiquitin chains to lower its histone deacetylase activity. Regulates MYC levels and cell proliferation via antagonizing ubiquitin E3 ligase FBXW7 thereby preventing MYC 'Lys-48'-linked ubiquitination and degradation. Participates in antiviral response by removing both 'Lys-48'-linked and 'Lys-63'-linked polyubiquitination of Zika virus envelope protein E. Constitutively associated with IL-33R/IL1RL1, deconjugates its 'Lys-27'-linked polyubiquitination resulting in its autophagic degradation. The sequence is that of Ubiquitin carboxyl-terminal hydrolase 38 (USP38) from Homo sapiens (Human).